The following is a 688-amino-acid chain: DNA ligase (688 aa).

Residues 42–46 (DAEYD), 91–92 (SL), and Glu128 each bind NAD(+). Lys130 acts as the N6-AMP-lysine intermediate in catalysis. Positions 151, 188, 305, and 329 each coordinate NAD(+). 4 residues coordinate Zn(2+): Cys423, Cys426, Cys441, and Cys447. The BRCT domain maps to 608–688 (APQGVLAGKT…GMRKLLEGQL (81 aa)).

The protein belongs to the NAD-dependent DNA ligase family. LigA subfamily. It depends on Mg(2+) as a cofactor. Mn(2+) serves as cofactor.

The enzyme catalyses NAD(+) + (deoxyribonucleotide)n-3'-hydroxyl + 5'-phospho-(deoxyribonucleotide)m = (deoxyribonucleotide)n+m + AMP + beta-nicotinamide D-nucleotide.. In terms of biological role, DNA ligase that catalyzes the formation of phosphodiester linkages between 5'-phosphoryl and 3'-hydroxyl groups in double-stranded DNA using NAD as a coenzyme and as the energy source for the reaction. It is essential for DNA replication and repair of damaged DNA. The polypeptide is DNA ligase (Paraburkholderia phytofirmans (strain DSM 17436 / LMG 22146 / PsJN) (Burkholderia phytofirmans)).